A 265-amino-acid chain; its full sequence is Membrane steroid-binding protein 2 (265 aa).

Residues W63–Y85 form a helical membrane-spanning segment. The segment at P94–V116 is disordered. Residues V118–K217 form the Cytochrome b5 heme-binding domain. A steroid-binding region spans residues E120–K217.

It belongs to the cytochrome b5 family. MAPR subfamily.

It is found in the cell membrane. Its function is as follows. Binds multiple steroid compounds. This is Membrane steroid-binding protein 2 from Oryza sativa subsp. japonica (Rice).